A 159-amino-acid chain; its full sequence is Urease subunit beta 2 (159 aa).

The segment at 1–23 (MAKEPTEAAHPQPEQTKTNHKAH) is disordered.

It belongs to the urease beta subunit family. In terms of assembly, heterotrimer of UreA (gamma), UreB (beta) and UreC (alpha) subunits. Three heterotrimers associate to form the active enzyme.

Its subcellular location is the cytoplasm. The enzyme catalyses urea + 2 H2O + H(+) = hydrogencarbonate + 2 NH4(+). Its pathway is nitrogen metabolism; urea degradation; CO(2) and NH(3) from urea (urease route): step 1/1. The protein is Urease subunit beta 2 of Brucella abortus biovar 1 (strain 9-941).